The following is a 406-amino-acid chain: Endoglucanase 1 (406 aa).

The signal sequence occupies residues 1-43 (MNSKKIGAMIAAAVLSLIVMTPAATRKIVQRQTRNSSTAVENS). 2 stretches are compositionally biased toward polar residues: residues 30 to 41 (QRQTRNSSTAVE) and 51 to 62 (ENVPVSQTHTND). The disordered stretch occupies residues 30-62 (QRQTRNSSTAVENSAADESETENVPVSQTHTND). Glu210 functions as the Proton donor in the catalytic mechanism. Glu330 serves as the catalytic Nucleophile.

It belongs to the glycosyl hydrolase 5 (cellulase A) family.

It carries out the reaction Endohydrolysis of (1-&gt;4)-beta-D-glucosidic linkages in cellulose, lichenin and cereal beta-D-glucans.. The sequence is that of Endoglucanase 1 (Eg I) from Ruminococcus albus.